The sequence spans 370 residues: Vasopressin V2 receptor (370 aa).

The tract at residues 1–28 is disordered; it reads MLRATTSAVPRALSWPAAPGNGSEREPL. The Extracellular segment spans residues 1–37; it reads MLRATTSAVPRALSWPAAPGNGSEREPLDDRDPLLAR. An N-linked (GlcNAc...) asparagine glycan is attached at Asn21. The helical transmembrane segment at 38-62 threads the bilayer; that stretch reads VELALLSTVFVAVALSNGLVLGALV. At 63 to 76 the chain is on the cytoplasmic side; sequence RRGRRGRWAPMHVF. Residues 77–97 form a helical membrane-spanning segment; sequence IGHLCLADLAVALFQVLPQLA. Residues 98–112 lie on the Extracellular side of the membrane; it reads WDATYRFRGPDALCR. The chain crosses the membrane as a helical span at residues 113 to 134; that stretch reads AVKYLQMVGMYASSYMILAMTL. The Cytoplasmic portion of the chain corresponds to 135–158; it reads DRHRAICRPMLAYRHGGGARWNRP. Residues 159 to 179 traverse the membrane as a helical segment; the sequence is VLVAWAFSLLLSLPQLFIFAQ. The Extracellular segment spans residues 180–199; the sequence is RDVGDGSGVLDCWASFAEPW. Residues 200–219 traverse the membrane as a helical segment; sequence GLRAYVTWIALMVFVAPALG. The Cytoplasmic segment spans residues 220–270; that stretch reads IAACQVLIFREIHTSLVPGPAERAGGHRGGRRAGSPREGARVSAAMAKTAR. Residues 271-292 traverse the membrane as a helical segment; that stretch reads MTLVIVAVYVLCWAPFFLVQLW. Over 293 to 307 the chain is Extracellular; that stretch reads SVWDPKAPREGPPFV. A helical transmembrane segment spans residues 308-327; that stretch reads LLMLLASLNSCTNPWIYASF. The Cytoplasmic portion of the chain corresponds to 328–370; it reads SSSISSELRSLLCCPRRRTPPSLRPQEESCATASSFSARDTSS. 2 S-palmitoyl cysteine lipidation sites follow: Cys340 and Cys341. A disordered region spans residues 347-370; that stretch reads PPSLRPQEESCATASSFSARDTSS. Residues 356–370 are compositionally biased toward polar residues; the sequence is SCATASSFSARDTSS.

Belongs to the G-protein coupled receptor 1 family. Vasopressin/oxytocin receptor subfamily. As to quaternary structure, interacts with ARRDC4. Identified in a complex containing at least ARRDC4, V2R and HGS. Interacts with TMEM147.

The protein localises to the cell membrane. In terms of biological role, receptor for arginine vasopressin. The activity of this receptor is mediated by G proteins which activate adenylate cyclase. Involved in renal water reabsorption. This chain is Vasopressin V2 receptor (AVPR2), found in Sus scrofa (Pig).